A 375-amino-acid polypeptide reads, in one-letter code: Anhydro-N-acetylmuramic acid kinase (375 aa).

G12–D19 serves as a coordination point for ATP.

Belongs to the anhydro-N-acetylmuramic acid kinase family.

The catalysed reaction is 1,6-anhydro-N-acetyl-beta-muramate + ATP + H2O = N-acetyl-D-muramate 6-phosphate + ADP + H(+). Its pathway is amino-sugar metabolism; 1,6-anhydro-N-acetylmuramate degradation. The protein operates within cell wall biogenesis; peptidoglycan recycling. Catalyzes the specific phosphorylation of 1,6-anhydro-N-acetylmuramic acid (anhMurNAc) with the simultaneous cleavage of the 1,6-anhydro ring, generating MurNAc-6-P. Is required for the utilization of anhMurNAc either imported from the medium or derived from its own cell wall murein, and thus plays a role in cell wall recycling. The sequence is that of Anhydro-N-acetylmuramic acid kinase from Mannheimia succiniciproducens (strain KCTC 0769BP / MBEL55E).